The primary structure comprises 438 residues: Glutaryl-CoA dehydrogenase, mitochondrial (438 aa).

A mitochondrion-targeting transit peptide spans 1 to 44; it reads MALRGVSVRLLSRGPGLHVLRTWVSSAAQTEKGGRTQSQLAKSS. Residues 138-139 and S186 each bind substrate; that span reads RS. FAD-binding positions include 177-186 and 212-214; these read FGLTEPNSGS and WIT. Residue K240 is modified to N6-acetyllysine. 287 to 294 serves as a coordination point for substrate; that stretch reads FGCLNNAR. FAD contacts are provided by residues R319, Q330, and 387–391; that span reads DMLGG. E414 (proton acceptor) is an active-site residue. Residue G415 participates in substrate binding. Residues 416-418 and F434 contribute to the FAD site; that span reads THD.

This sequence belongs to the acyl-CoA dehydrogenase family. Homotetramer. The cofactor is FAD. In terms of tissue distribution, isoform Long and isoform Short are expressed in fibroblasts and liver.

It is found in the mitochondrion matrix. The catalysed reaction is glutaryl-CoA + oxidized [electron-transfer flavoprotein] + 2 H(+) = (2E)-butenoyl-CoA + reduced [electron-transfer flavoprotein] + CO2. The protein operates within amino-acid metabolism; lysine degradation. Its pathway is amino-acid metabolism; tryptophan metabolism. Strongly inhibited by MCPA-CoA, a metabolite of hypoglycin which is present in unripened fruit of the ackee tree. Its function is as follows. Catalyzes the oxidative decarboxylation of glutaryl-CoA to crotonyl-CoA and CO(2) in the degradative pathway of L-lysine, L-hydroxylysine, and L-tryptophan metabolism. It uses electron transfer flavoprotein as its electron acceptor. Isoform Short is inactive. This is Glutaryl-CoA dehydrogenase, mitochondrial (GCDH) from Homo sapiens (Human).